Consider the following 161-residue polypeptide: ATP synthase subunit b (161 aa).

The chain crosses the membrane as a helical span at residues 10–29; that stretch reads SVIQLMSFFLLLYILKKFLY.

The protein belongs to the ATPase B chain family. F-type ATPases have 2 components, F(1) - the catalytic core - and F(0) - the membrane proton channel. F(1) has five subunits: alpha(3), beta(3), gamma(1), delta(1), epsilon(1). F(0) has three main subunits: a(1), b(2) and c(10-14). The alpha and beta chains form an alternating ring which encloses part of the gamma chain. F(1) is attached to F(0) by a central stalk formed by the gamma and epsilon chains, while a peripheral stalk is formed by the delta and b chains.

The protein resides in the cell inner membrane. Functionally, f(1)F(0) ATP synthase produces ATP from ADP in the presence of a proton or sodium gradient. F-type ATPases consist of two structural domains, F(1) containing the extramembraneous catalytic core and F(0) containing the membrane proton channel, linked together by a central stalk and a peripheral stalk. During catalysis, ATP synthesis in the catalytic domain of F(1) is coupled via a rotary mechanism of the central stalk subunits to proton translocation. In terms of biological role, component of the F(0) channel, it forms part of the peripheral stalk, linking F(1) to F(0). The sequence is that of ATP synthase subunit b from Thermosipho melanesiensis (strain DSM 12029 / CIP 104789 / BI429).